The chain runs to 625 residues: DNA mismatch repair protein MutL (625 aa).

A disordered region spans residues 404 to 427; that stretch reads PPPRNAPQSTGMPSMAGTGLPATS.

Belongs to the DNA mismatch repair MutL/HexB family.

Its function is as follows. This protein is involved in the repair of mismatches in DNA. It is required for dam-dependent methyl-directed DNA mismatch repair. May act as a 'molecular matchmaker', a protein that promotes the formation of a stable complex between two or more DNA-binding proteins in an ATP-dependent manner without itself being part of a final effector complex. This chain is DNA mismatch repair protein MutL, found in Xanthomonas oryzae pv. oryzae (strain MAFF 311018).